Reading from the N-terminus, the 202-residue chain is ATP-dependent Clp protease proteolytic subunit (202 aa).

Ser-106 (nucleophile) is an active-site residue. His-131 is an active-site residue.

The protein belongs to the peptidase S14 family. As to quaternary structure, fourteen ClpP subunits assemble into 2 heptameric rings which stack back to back to give a disk-like structure with a central cavity, resembling the structure of eukaryotic proteasomes.

It localises to the cytoplasm. The catalysed reaction is Hydrolysis of proteins to small peptides in the presence of ATP and magnesium. alpha-casein is the usual test substrate. In the absence of ATP, only oligopeptides shorter than five residues are hydrolyzed (such as succinyl-Leu-Tyr-|-NHMec, and Leu-Tyr-Leu-|-Tyr-Trp, in which cleavage of the -Tyr-|-Leu- and -Tyr-|-Trp bonds also occurs).. In terms of biological role, cleaves peptides in various proteins in a process that requires ATP hydrolysis. Has a chymotrypsin-like activity. Plays a major role in the degradation of misfolded proteins. This is ATP-dependent Clp protease proteolytic subunit from Shewanella baltica (strain OS223).